The following is a 715-amino-acid chain: MTTTSAFMLNVRLDNVAVVAIDVPGEKVNTLKAEFAAQVRAILKQIRENKALQGVVFISAKADNFIAGADINMIGHCQNAQEAETLARQGQQLMAEIQALPVPVIAAIHGACLGGGLEMALACHRRICTDDVKTVLGLPEVQLGLLPGSGGTQRLPRLVGVSTALDMILTGKQLRARQALKAGLVDDVVPQTILLEAAVELAKKERLAQRTLPVRERILAGPLGRALLFRLVRKKTAQKTQGNYPATERIIDVIETGLAQGSSSGYDAEARAFGELAMTPQSQALRAVFFASTEVKKDPGSDAPPGPLNSVGILGGGLMGGGIAWVTACKGGLPVRIKDINTQGINHALKYSWDLLETKVRRRHIKASERDKQLALISGSTDYRGFSHRDLVIEAVFEDLPLKQQMVAEVEQNCATHTIFASNTSSLPIGDIAANAARPEQVIGLHFFSPVEKMPLVEVIPHASTSAQTIATTVKLAKKQGKTPIVVSDKAGFYVNRILAPYINEAIRMLTEGERVEHIDAALVKFGFPVGPIQLLDEVGIDTGTKIIPVLEAAYGERFSAPANVVASILNDDRKGRKNGRGFYLYGEKGRKSKKQVDPAIYKLIGVQGQSRLSAQQVAERCVMLMLNEAARCFDEKVIRSARDGDIGAVFGIGFPPFLGGPFRYMDALGPGEMVATLQRLAALYGPRYAPCEQLVRMAERREHFWTNGETDQGN.

The interval 1 to 190 is enoyl-CoA hydratase; that stretch reads MTTTSAFMLN…KAGLVDDVVP (190 aa). The tract at residues 306–715 is 3-hydroxyacyl-CoA dehydrogenase; sequence GPLNSVGILG…WTNGETDQGN (410 aa).

This sequence in the N-terminal section; belongs to the enoyl-CoA hydratase/isomerase family. In the central section; belongs to the 3-hydroxyacyl-CoA dehydrogenase family. As to quaternary structure, heterotetramer of two alpha chains (FadJ) and two beta chains (FadI).

It is found in the cytoplasm. The catalysed reaction is a (3S)-3-hydroxyacyl-CoA = a (2E)-enoyl-CoA + H2O. The enzyme catalyses a 4-saturated-(3S)-3-hydroxyacyl-CoA = a (3E)-enoyl-CoA + H2O. It catalyses the reaction a (3S)-3-hydroxyacyl-CoA + NAD(+) = a 3-oxoacyl-CoA + NADH + H(+). It carries out the reaction (3S)-3-hydroxybutanoyl-CoA = (3R)-3-hydroxybutanoyl-CoA. The protein operates within lipid metabolism; fatty acid beta-oxidation. Functionally, catalyzes the formation of a hydroxyacyl-CoA by addition of water on enoyl-CoA. Also exhibits 3-hydroxyacyl-CoA epimerase and 3-hydroxyacyl-CoA dehydrogenase activities. The sequence is that of Fatty acid oxidation complex subunit alpha from Salmonella newport (strain SL254).